The primary structure comprises 32 residues: Cytochrome b6-f complex subunit 7 (32 aa).

Residues 9-27 (AAVFWILIPIGLVGGALLL) traverse the membrane as a helical segment.

This sequence belongs to the PetM family. As to quaternary structure, the 4 large subunits of the cytochrome b6-f complex are cytochrome b6, subunit IV (17 kDa polypeptide, PetD), cytochrome f and the Rieske protein, while the 4 small subunits are PetG, PetL, PetM and PetN. The complex functions as a dimer.

It is found in the cellular thylakoid membrane. Functionally, component of the cytochrome b6-f complex, which mediates electron transfer between photosystem II (PSII) and photosystem I (PSI), cyclic electron flow around PSI, and state transitions. The chain is Cytochrome b6-f complex subunit 7 from Prochlorococcus marinus (strain MIT 9301).